The following is a 383-amino-acid chain: Cyclin-D4-2 (383 aa).

Residues Ala51–Gly62 are compositionally biased toward gly residues. 3 disordered regions span residues Ala51 to Phe70, Gln313 to Pro335, and Ala354 to Arg383. The segment covering Ser323–Pro335 has biased composition (low complexity).

The protein belongs to the cyclin family. Cyclin D subfamily.

This chain is Cyclin-D4-2 (CYCD4-2), found in Oryza sativa subsp. japonica (Rice).